We begin with the raw amino-acid sequence, 143 residues long: Transcriptional regulator MraZ (143 aa).

SpoVT-AbrB domains are found at residues threonine 5–glutamate 47 and alanine 76–threonine 119.

Belongs to the MraZ family. Forms oligomers.

It localises to the cytoplasm. It is found in the nucleoid. This Kineococcus radiotolerans (strain ATCC BAA-149 / DSM 14245 / SRS30216) protein is Transcriptional regulator MraZ.